Reading from the N-terminus, the 509-residue chain is Maturase K (509 aa).

Belongs to the intron maturase 2 family. MatK subfamily.

The protein resides in the plastid. The protein localises to the chloroplast. Usually encoded in the trnK tRNA gene intron. Probably assists in splicing its own and other chloroplast group II introns. This chain is Maturase K, found in Clematis ligusticifolia (Western white clematis).